A 169-amino-acid polypeptide reads, in one-letter code: Large ribosomal subunit protein uL15 (169 aa).

Residues 20 to 56 form a disordered region; that stretch reads GRGIGSGKGKTGGRGVKGQKARSGVSIKGFEGGQMPL. Over residues 21 to 35 the composition is skewed to gly residues; sequence RGIGSGKGKTGGRGV.

This sequence belongs to the universal ribosomal protein uL15 family. As to quaternary structure, part of the 50S ribosomal subunit.

Binds to the 23S rRNA. In Methylorubrum extorquens (strain CM4 / NCIMB 13688) (Methylobacterium extorquens), this protein is Large ribosomal subunit protein uL15.